The primary structure comprises 142 residues: Large ribosomal subunit protein uL11 (142 aa).

This sequence belongs to the universal ribosomal protein uL11 family. In terms of assembly, part of the ribosomal stalk of the 50S ribosomal subunit. Interacts with L10 and the large rRNA to form the base of the stalk. L10 forms an elongated spine to which L12 dimers bind in a sequential fashion forming a multimeric L10(L12)X complex. One or more lysine residues are methylated.

Forms part of the ribosomal stalk which helps the ribosome interact with GTP-bound translation factors. This is Large ribosomal subunit protein uL11 from Sinorhizobium fredii (strain NBRC 101917 / NGR234).